The chain runs to 371 residues: Putative glutamate--cysteine ligase 2 (371 aa).

It belongs to the glutamate--cysteine ligase type 2 family. YbdK subfamily.

The enzyme catalyses L-cysteine + L-glutamate + ATP = gamma-L-glutamyl-L-cysteine + ADP + phosphate + H(+). Its function is as follows. ATP-dependent carboxylate-amine ligase which exhibits weak glutamate--cysteine ligase activity. The chain is Putative glutamate--cysteine ligase 2 from Paraburkholderia xenovorans (strain LB400).